Consider the following 403-residue polypeptide: Phosphoserine phosphatase RsbP (403 aa).

The PAS domain maps to 1-42; that stretch reads MDKQLNDAPCGFLALSEEGSIIAANRTLIKILDYEPEQVIGQ. The 212-residue stretch at 191 to 402 folds into the PPM-type phosphatase domain; the sequence is QVQIDSYYNA…DDECFILVDV (212 aa).

Mn(2+) is required as a cofactor.

The catalysed reaction is O-phospho-L-serine + H2O = L-serine + phosphate. It catalyses the reaction O-phospho-D-serine + H2O = D-serine + phosphate. In terms of biological role, positive regulator of sigma-B activity. Dephosphorylates RsbV in response to energy stress. The polypeptide is Phosphoserine phosphatase RsbP (rsbP) (Bacillus subtilis (strain 168)).